The following is a 581-amino-acid chain: 2-isopropylmalate synthase (581 aa).

A Pyruvate carboxyltransferase domain is found at 32–306 (PQWCAVDLRD…DPQLDFSDIK (275 aa)). Mg(2+) is bound by residues Asp-41, His-245, His-247, and Asn-281. Residues 455–581 (RSAPVEQIAL…KHQQLQNGGV (127 aa)) are regulatory domain.

The protein belongs to the alpha-IPM synthase/homocitrate synthase family. LeuA type 2 subfamily. As to quaternary structure, homodimer. Requires Mg(2+) as cofactor.

The protein resides in the cytoplasm. It catalyses the reaction 3-methyl-2-oxobutanoate + acetyl-CoA + H2O = (2S)-2-isopropylmalate + CoA + H(+). The protein operates within amino-acid biosynthesis; L-leucine biosynthesis; L-leucine from 3-methyl-2-oxobutanoate: step 1/4. Functionally, catalyzes the condensation of the acetyl group of acetyl-CoA with 3-methyl-2-oxobutanoate (2-ketoisovalerate) to form 3-carboxy-3-hydroxy-4-methylpentanoate (2-isopropylmalate). The sequence is that of 2-isopropylmalate synthase from Corynebacterium efficiens (strain DSM 44549 / YS-314 / AJ 12310 / JCM 11189 / NBRC 100395).